Consider the following 352-residue polypeptide: Fatty acid desaturase (352 aa).

Transmembrane regions (helical) follow at residues 28 to 48 (SLIQLLNTFIPFFGLWFLAYL) and 55 to 75 (LLTLALTVIAAGFLTRIFIIF). Positions 76–80 (HDCCH) match the Histidine box-1 motif. Residues 89–109 (YNHILGFLTGVLTLFPYLQWQ) form a helical membrane-spanning segment. A Histidine box-2 motif is present at residues 112 to 116 (HSIHH). The next 3 membrane-spanning stretches (helical) occupy residues 151–171 (LYRNPFIMFILGPIYVFLITN), 186–206 (TYLTNLAIVALAAACCLIFGW), and 209–229 (FLLVQGPIFLISGSIGVWLFY). The Histidine box-3 signature appears at 274-278 (HHVHH).

This sequence belongs to the fatty acid desaturase type 1 family.

Its subcellular location is the cell membrane. The protein operates within lipid metabolism; fatty acid metabolism. Its function is as follows. Catalyzes the introduction of a cis-double bond at the delta(5) position of existing saturated fatty acids attached to membrane phospholipids. It is not strictly specific for palmitic acid (C16) but can also accept C14 as well as C18 species to yield unsaturated fatty acids. The sequence is that of Fatty acid desaturase (des) from Bacillus subtilis (strain 168).